A 170-amino-acid polypeptide reads, in one-letter code: Adenine phosphoribosyltransferase (170 aa).

The protein belongs to the purine/pyrimidine phosphoribosyltransferase family. As to quaternary structure, homodimer.

It is found in the cytoplasm. It catalyses the reaction AMP + diphosphate = 5-phospho-alpha-D-ribose 1-diphosphate + adenine. The protein operates within purine metabolism; AMP biosynthesis via salvage pathway; AMP from adenine: step 1/1. In terms of biological role, catalyzes a salvage reaction resulting in the formation of AMP, that is energically less costly than de novo synthesis. This is Adenine phosphoribosyltransferase from Lysinibacillus sphaericus (strain C3-41).